The primary structure comprises 143 residues: Small ribosomal subunit protein eS19x (143 aa).

The protein belongs to the eukaryotic ribosomal protein eS19 family.

The sequence is that of Small ribosomal subunit protein eS19x (RPS19C) from Arabidopsis thaliana (Mouse-ear cress).